The chain runs to 541 residues: Methyl-accepting chemotaxis protein PcaY (541 aa).

The Cytoplasmic segment spans residues 1–10 (MLANLKIRTG). Residues 11–31 (MFWVLSLFSLTLLFSTASAWW) form a helical membrane-spanning segment. Residues 32–189 (AAVGSDQQIT…ESDRRLARAQ (158 aa)) are Periplasmic-facing. The ligand-binding domain stretch occupies residues 35-187 (GSDQQITELD…MLESDRRLAR (153 aa)). A helical membrane pass occupies residues 190–210 (LLSLCLLGMTVVLAVLCWAFI). At 211–541 (AQRVLHPLRE…MTALVGRFKV (331 aa)) the chain is on the cytoplasmic side. Residues 212-264 (QRVLHPLREAGGHFRRIASGDLSVPVQGQGNNEIGQLFHELQRMQQSQRDTLG) enclose the HAMP domain. The Methyl-accepting transducer domain maps to 269-505 (CARQLDAAAS…EVDRNLLNIR (237 aa)). The segment at 322 to 341 (TSQTTSESNQLAAQSRRQVS) is disordered.

It belongs to the methyl-accepting chemotaxis (MCP) protein family.

The protein resides in the cell inner membrane. Functionally, chemotactic-signal transducers respond to changes in the concentration of attractants and repellents in the environment, transduce a signal from the outside to the inside of the cell, and facilitate sensory adaptation through the variation of the level of methylation. PcaY is responsible for the detection of multiple aromatic and hydroaromatic compounds that are metabolized through the beta-ketoadipate catabolic pathway, including vanillin, vanillate, 4-hydroxybenzoate (4-HBA), benzoate and protocatechuate. It also senses several nonmetabolizable aromatic compounds. The sequence is that of Methyl-accepting chemotaxis protein PcaY from Pseudomonas putida (strain ATCC 700007 / DSM 6899 / JCM 31910 / BCRC 17059 / LMG 24140 / F1).